A 1233-amino-acid polypeptide reads, in one-letter code: Structural maintenance of chromosomes protein 1A (1233 aa).

32–39 is a binding site for ATP; that stretch reads GPNGSGKS. Coiled-coil stretches lie at residues 104–124 and 163–503; these read EYKINNKVVQLHEYSEELEKL and ELAQ…KAEI. A compositionally biased stretch (basic and acidic residues) spans 284 to 293; sequence IKEKDSELNQ. 2 disordered regions span residues 284–307 and 350–369; these read IKEKDSELNQKRPQYIKAKENTSH and FEERMEEESQSQGRDLTLEE. Phosphoserine is present on residues serine 358 and serine 360. One can recognise an SMC hinge domain in the interval 515–629; the sequence is VYGRLIDLCQ…DNVEDARRIA (115 aa). Residues lysine 648 and lysine 713 each carry the N6-acetyllysine modification. Residues 660-935 adopt a coiled-coil conformation; sequence KAKARRWDEK…RHNLLQACKM (276 aa). The disordered stretch occupies residues 946–969; sequence TMDDISQEEGGSQGEESVSGSQRT. Over residues 953-967 the composition is skewed to low complexity; it reads EEGGSQGEESVSGSQ. Phosphoserine is present on residues serine 957, serine 962, serine 966, and serine 970. Residues 991–1068 are a coiled coil; the sequence is KDAQAEEEIK…FEQIKKERFD (78 aa). Lysine 1037 carries the post-translational modification N6-acetyllysine.

This sequence belongs to the SMC family. SMC1 subfamily. Forms a heterodimer with SMC3 in cohesin complexes. Cohesin complexes are composed of the SMC1 (SMC1A or meiosis-specific SMC1B) and SMC3 heterodimer attached via their SMC hinge domain, RAD21 which link them, and one STAG protein (STAG1, STAG2 or meiosis-specific STAG3), which interacts with RAD21. In germ cell cohesin complexes, SMC1A is mutually exclusive with SMC1B. Found in a complex with CDCA5, SMC3 and RAD21, PDS5A/SCC-112 and PDS5B/APRIN. Interacts with STAG3, NDC80, BRAC1, BRAT1 and RPGR. Found in a complex containing POLE and SMC3. The cohesin complex interacts with the cohesin loading complex subunits NIPBL/Scc2 (via HEAT repeats) and MAU2/Scc4. NIPBL directly contacts all members of the complex, RAD21, SMC1A/B, SMC3 and STAG1. Interacts with SYCP2. In terms of processing, phosphorylated upon ionizing radiation or DNA methylation. Phosphorylation of Ser-957 and Ser-966 activates it and is required for S-phase checkpoint activation. Post-translationally, ubiquitinated by the DCX(DCAF15) complex, leading to its degradation.

It localises to the nucleus. Its subcellular location is the chromosome. In terms of biological role, involved in chromosome cohesion during cell cycle and in DNA repair. Central component of cohesin complex. The cohesin complex is required for the cohesion of sister chromatids after DNA replication. The cohesin complex apparently forms a large proteinaceous ring within which sister chromatids can be trapped. At anaphase, the complex is cleaved and dissociates from chromatin, allowing sister chromatids to segregate. The cohesin complex may also play a role in spindle pole assembly during mitosis. Involved in DNA repair via its interaction with BRCA1 and its related phosphorylation by ATM, or via its phosphorylation by ATR. Works as a downstream effector both in the ATM/NBS1 branch and in the ATR/MSH2 branch of S-phase checkpoint. This chain is Structural maintenance of chromosomes protein 1A (Smc1a), found in Rattus norvegicus (Rat).